A 448-amino-acid polypeptide reads, in one-letter code: Tubulin beta chain (448 aa).

GTP contacts are provided by Gln11, Glu69, Ser138, Gly142, Thr143, Gly144, Asn204, and Asn226. Position 69 (Glu69) interacts with Mg(2+). The segment at 425 to 448 (YQDASISEGEEEYLEEEEPLEHEE) is disordered. Residues 432 to 448 (EGEEEYLEEEEPLEHEE) show a composition bias toward acidic residues.

This sequence belongs to the tubulin family. Dimer of alpha and beta chains. A typical microtubule is a hollow water-filled tube with an outer diameter of 25 nm and an inner diameter of 15 nM. Alpha-beta heterodimers associate head-to-tail to form protofilaments running lengthwise along the microtubule wall with the beta-tubulin subunit facing the microtubule plus end conferring a structural polarity. Microtubules usually have 13 protofilaments but different protofilament numbers can be found in some organisms and specialized cells. Requires Mg(2+) as cofactor.

Its subcellular location is the cytoplasm. The protein resides in the cytoskeleton. Its function is as follows. Tubulin is the major constituent of microtubules, a cylinder consisting of laterally associated linear protofilaments composed of alpha- and beta-tubulin heterodimers. Microtubules grow by the addition of GTP-tubulin dimers to the microtubule end, where a stabilizing cap forms. Below the cap, tubulin dimers are in GDP-bound state, owing to GTPase activity of alpha-tubulin. This chain is Tubulin beta chain, found in Aspergillus flavus.